The sequence spans 467 residues: Probable receptor-like protein kinase At3g17420 (467 aa).

The signal sequence occupies residues 1–35 (MTSQLKRTLTKRYGVLELWEIIVIALFAAFIVILV). Residues 36–123 (LSVWLSFRKK…LPPSTPSTTA (88 aa)) lie on the Extracellular side of the membrane. Asn-50 carries an N-linked (GlcNAc...) asparagine glycan. Ser-70 bears the Phosphoserine mark. Asn-79 carries N-linked (GlcNAc...) asparagine glycosylation. A disordered region spans residues 102 to 126 (GSLEKKPLVGSHLPPSTPSTTAPSP). A helical membrane pass occupies residues 124–144 (PSPLLGLPEVSHIGWGHWFTL). Over 145-467 (RDLQLATNHF…DNDITTDAKI (323 aa)) the chain is Cytoplasmic. The 280-residue stretch at 154 to 433 (FSKESIIGDG…MLESDEYPVM (280 aa)) folds into the Protein kinase domain. ATP is bound by residues 160–168 (IGDGGYGVV) and Lys-182. Tyr-227 carries the post-translational modification Phosphotyrosine. Residue Asp-280 is the Proton acceptor of the active site. Phosphoserine occurs at positions 284 and 313. 2 positions are modified to phosphothreonine: Thr-314 and Thr-319. Position 327 is a phosphotyrosine (Tyr-327). The segment at 413–467 (DKRPKMSQVARMLESDEYPVMPREERRRRRNQNAETHRESTDTNKDNDITTDAKI) is disordered. Residues 447-467 (ETHRESTDTNKDNDITTDAKI) are compositionally biased toward basic and acidic residues.

The protein belongs to the protein kinase superfamily. Ser/Thr protein kinase family.

It localises to the cell membrane. It carries out the reaction L-seryl-[protein] + ATP = O-phospho-L-seryl-[protein] + ADP + H(+). The catalysed reaction is L-threonyl-[protein] + ATP = O-phospho-L-threonyl-[protein] + ADP + H(+). The chain is Probable receptor-like protein kinase At3g17420 from Arabidopsis thaliana (Mouse-ear cress).